Consider the following 583-residue polypeptide: Aspartyl protease APCB1 (583 aa).

The chain crosses the membrane as a helical span at residues 83 to 103; that stretch reads LVLGLLGISLLAVAFYASVFP. Residues 203-564 enclose the Peptidase A1 domain; the sequence is YYTRILVGKP…DNVKRRIGWM (362 aa). Catalysis depends on residues aspartate 223 and aspartate 431.

Belongs to the peptidase A1 family. Interacts with BAG6 and BAGP1.

Its subcellular location is the membrane. Functionally, involved in proteolytic processing of BAG6 and plant basal immunity. In Arabidopsis thaliana (Mouse-ear cress), this protein is Aspartyl protease APCB1.